The following is a 176-amino-acid chain: Ribosome maturation factor RimM (176 aa).

Positions Glu-97–Phe-176 constitute a PRC barrel domain.

It belongs to the RimM family. In terms of assembly, binds ribosomal protein uS19.

The protein localises to the cytoplasm. An accessory protein needed during the final step in the assembly of 30S ribosomal subunit, possibly for assembly of the head region. Essential for efficient processing of 16S rRNA. May be needed both before and after RbfA during the maturation of 16S rRNA. It has affinity for free ribosomal 30S subunits but not for 70S ribosomes. This chain is Ribosome maturation factor RimM, found in Shewanella amazonensis (strain ATCC BAA-1098 / SB2B).